Consider the following 410-residue polypeptide: Acetate kinase (410 aa).

Residue asparagine 7 coordinates Mg(2+). Lysine 14 serves as a coordination point for ATP. Substrate is bound at residue arginine 88. The active-site Proton donor/acceptor is aspartate 145. ATP-binding positions include 203-207, 278-280, and 326-330; these read HAGNG, DTR, and GIGEN. Mg(2+) is bound at residue glutamate 379.

Belongs to the acetokinase family. In terms of assembly, homodimer. Requires Mg(2+) as cofactor. Mn(2+) is required as a cofactor.

The protein localises to the cytoplasm. It carries out the reaction acetate + ATP = acetyl phosphate + ADP. It participates in metabolic intermediate biosynthesis; acetyl-CoA biosynthesis; acetyl-CoA from acetate: step 1/2. Functionally, catalyzes the formation of acetyl phosphate from acetate and ATP. Can also catalyze the reverse reaction. The polypeptide is Acetate kinase (Chlorante-Aster yellows phytoplasma).